The sequence spans 224 residues: F420-dependent NADP reductase (224 aa).

NADP(+) contacts are provided by residues 9–12 (TGDQ), 31–32 (SR), Lys-36, Val-74, Val-100, and Ala-145.

The protein belongs to the F420-dependent NADP reductase family. In terms of assembly, homotetramer.

It catalyses the reaction reduced coenzyme F420-(gamma-L-Glu)(n) + NADP(+) = oxidized coenzyme F420-(gamma-L-Glu)(n) + NADPH + 2 H(+). In terms of biological role, catalyzes the reduction of NADP(+) with F420H(2) via hydride transfer, and the reverse reaction, i.e. the reduction of F420 with NADPH. Probably functions in the regeneration of NADPH required in biosynthetic reactions. This Methanothermobacter marburgensis (strain ATCC BAA-927 / DSM 2133 / JCM 14651 / NBRC 100331 / OCM 82 / Marburg) (Methanobacterium thermoautotrophicum) protein is F420-dependent NADP reductase.